The chain runs to 189 residues: Histidinol-phosphate aminotransferase (189 aa).

This sequence belongs to the class-II pyridoxal-phosphate-dependent aminotransferase family. Histidinol-phosphate aminotransferase subfamily. Homodimer. It depends on pyridoxal 5'-phosphate as a cofactor.

The enzyme catalyses L-histidinol phosphate + 2-oxoglutarate = 3-(imidazol-4-yl)-2-oxopropyl phosphate + L-glutamate. It functions in the pathway amino-acid biosynthesis; L-histidine biosynthesis; L-histidine from 5-phospho-alpha-D-ribose 1-diphosphate: step 7/9. This chain is Histidinol-phosphate aminotransferase (hisC), found in Thiocapsa roseopersicina.